Here is a 1230-residue protein sequence, read N- to C-terminus: Structural maintenance of chromosomes protein 3 (1230 aa).

32 to 39 (GSNGSGKS) contacts ATP. Residues lysine 112 and lysine 113 each carry the N6-acetyllysine modification. A coiled-coil region spans residues 172–482 (AKSFEVKLKA…SESLDTRKEL (311 aa)). One can recognise an SMC hinge domain in the interval 535-651 (SVFGTLGELI…KDLGQGLKLA (117 aa)). Residues 685–1041 (LESLKNLNES…KLKQQKVNAV (357 aa)) are a coiled coil. The disordered stretch occupies residues 1078–1097 (DHDESIDVDMDAESNESQNG).

This sequence belongs to the SMC family. SMC3 subfamily. In terms of assembly, cohesin complexes are composed of the SMC1 and SMC3 heterodimer attached via their SMC hinge domain, MCD1/SCC1 which link them, and IRR1/SCC3, which interacts with MCD1. The cohesin complex also interacts with SCC2, which is required for its association with chromosomes. Post-translationally, acetylation at Lys-112 and Lys-113 by ECO1 is important for genome stability and S phase sister chromatid cohesion.

It localises to the nucleus. Its subcellular location is the chromosome. Its function is as follows. Involved in chromosome cohesion during cell cycle and in DNA repair. Central component of cohesin complex. The cohesin complex is required for the cohesion of sister chromatids after DNA replication. The cohesin complex apparently forms a large proteinaceous ring within which sister chromatids can be trapped. At anaphase, the complex is cleaved and dissociates from chromatin, allowing sister chromatids to segregate. This chain is Structural maintenance of chromosomes protein 3 (SMC3), found in Saccharomyces cerevisiae (strain ATCC 204508 / S288c) (Baker's yeast).